Consider the following 258-residue polypeptide: L-aspartate dehydrogenase 1 (258 aa).

NAD(+) contacts are provided by Ala121 and Asn181. The active site involves His211.

Belongs to the L-aspartate dehydrogenase family.

The enzyme catalyses L-aspartate + NADP(+) + H2O = oxaloacetate + NH4(+) + NADPH + H(+). The catalysed reaction is L-aspartate + NAD(+) + H2O = oxaloacetate + NH4(+) + NADH + H(+). It functions in the pathway cofactor biosynthesis; NAD(+) biosynthesis; iminoaspartate from L-aspartate (dehydrogenase route): step 1/1. Its function is as follows. Specifically catalyzes the NAD or NADP-dependent dehydrogenation of L-aspartate to iminoaspartate. The chain is L-aspartate dehydrogenase 1 from Bordetella bronchiseptica (strain ATCC BAA-588 / NCTC 13252 / RB50) (Alcaligenes bronchisepticus).